The sequence spans 405 residues: Enoyl-[acyl-carrier-protein] reductase [NADH] (405 aa).

NAD(+) is bound by residues Gly48 to Tyr53, Phe74 to Glu75, Asp111 to Ala112, and Leu140 to Ala141. Substrate is bound at residue Tyr226. Tyr236 functions as the Proton donor in the catalytic mechanism. Residues Lys245 and Val274–Thr276 each bind NAD(+).

It belongs to the TER reductase family. In terms of assembly, monomer.

It carries out the reaction a 2,3-saturated acyl-[ACP] + NAD(+) = a (2E)-enoyl-[ACP] + NADH + H(+). The protein operates within lipid metabolism; fatty acid biosynthesis. Its function is as follows. Involved in the final reduction of the elongation cycle of fatty acid synthesis (FAS II). Catalyzes the reduction of a carbon-carbon double bond in an enoyl moiety that is covalently linked to an acyl carrier protein (ACP). The polypeptide is Enoyl-[acyl-carrier-protein] reductase [NADH] (Xanthomonas oryzae pv. oryzae (strain PXO99A)).